Here is a 568-residue protein sequence, read N- to C-terminus: Potassium-transporting ATPase potassium-binding subunit (568 aa).

The next 10 helical transmembrane spans lie at 3-23 (TEVL…YPLG), 68-88 (LLVV…TQGV), 133-153 (FVIM…MAGI), 180-200 (LLPL…PMGF), 256-276 (VECW…GFYL), 281-301 (LGYS…CINV), 375-395 (FGGV…AVFI), 421-441 (IVAL…AYLF), 497-517 (IVLI…AGIL), and 535-555 (VTFG…SFFP).

This sequence belongs to the KdpA family. As to quaternary structure, the system is composed of three essential subunits: KdpA, KdpB and KdpC.

The protein localises to the cell inner membrane. Functionally, part of the high-affinity ATP-driven potassium transport (or Kdp) system, which catalyzes the hydrolysis of ATP coupled with the electrogenic transport of potassium into the cytoplasm. This subunit binds the periplasmic potassium ions and delivers the ions to the membrane domain of KdpB through an intramembrane tunnel. This chain is Potassium-transporting ATPase potassium-binding subunit, found in Phocaeicola vulgatus (strain ATCC 8482 / DSM 1447 / JCM 5826 / CCUG 4940 / NBRC 14291 / NCTC 11154) (Bacteroides vulgatus).